The sequence spans 340 residues: Anthranilate phosphoribosyltransferase (340 aa).

5-phospho-alpha-D-ribose 1-diphosphate contacts are provided by residues Gly83, 86 to 87, Thr91, 93 to 96, 111 to 119, and Ser123; these read GD, NIST, and KHGNRSITS. Position 83 (Gly83) interacts with anthranilate. Ser95 contributes to the Mg(2+) binding site. Residue Asn114 coordinates anthranilate. Position 169 (Arg169) interacts with anthranilate. 2 residues coordinate Mg(2+): Asp228 and Glu229.

This sequence belongs to the anthranilate phosphoribosyltransferase family. As to quaternary structure, homodimer. It depends on Mg(2+) as a cofactor.

It carries out the reaction N-(5-phospho-beta-D-ribosyl)anthranilate + diphosphate = 5-phospho-alpha-D-ribose 1-diphosphate + anthranilate. The protein operates within amino-acid biosynthesis; L-tryptophan biosynthesis; L-tryptophan from chorismate: step 2/5. In terms of biological role, catalyzes the transfer of the phosphoribosyl group of 5-phosphorylribose-1-pyrophosphate (PRPP) to anthranilate to yield N-(5'-phosphoribosyl)-anthranilate (PRA). This Solibacter usitatus (strain Ellin6076) protein is Anthranilate phosphoribosyltransferase.